Here is a 203-residue protein sequence, read N- to C-terminus: Imidazole glycerol phosphate synthase subunit HisH 1 (203 aa).

Residues 1-203 form the Glutamine amidotransferase type-1 domain; it reads MIAIIDYNAG…KMIENFVELI (203 aa). Cys82 acts as the Nucleophile in catalysis. Active-site residues include His184 and Glu186.

In terms of assembly, heterodimer of HisH and HisF.

Its subcellular location is the cytoplasm. It carries out the reaction 5-[(5-phospho-1-deoxy-D-ribulos-1-ylimino)methylamino]-1-(5-phospho-beta-D-ribosyl)imidazole-4-carboxamide + L-glutamine = D-erythro-1-(imidazol-4-yl)glycerol 3-phosphate + 5-amino-1-(5-phospho-beta-D-ribosyl)imidazole-4-carboxamide + L-glutamate + H(+). It catalyses the reaction L-glutamine + H2O = L-glutamate + NH4(+). It participates in amino-acid biosynthesis; L-histidine biosynthesis; L-histidine from 5-phospho-alpha-D-ribose 1-diphosphate: step 5/9. Functionally, IGPS catalyzes the conversion of PRFAR and glutamine to IGP, AICAR and glutamate. The HisH subunit provides the glutamine amidotransferase activity that produces the ammonia necessary to HisF for the synthesis of IGP and AICAR. This chain is Imidazole glycerol phosphate synthase subunit HisH 1 (hisH1), found in Methanococcus maripaludis (strain DSM 14266 / JCM 13030 / NBRC 101832 / S2 / LL).